A 192-amino-acid polypeptide reads, in one-letter code: Superoxide dismutase [Fe] (192 aa).

Residues His-26, His-73, Asp-157, and His-161 each coordinate Fe cation.

This sequence belongs to the iron/manganese superoxide dismutase family. Homodimer. Fe cation serves as cofactor.

It carries out the reaction 2 superoxide + 2 H(+) = H2O2 + O2. In terms of biological role, destroys superoxide anion radicals which are normally produced within the cells and which are toxic to biological systems. In Pseudoalteromonas translucida (strain TAC 125), this protein is Superoxide dismutase [Fe].